Consider the following 768-residue polypeptide: Cullin-3-A (768 aa).

Positions 677-698 are disordered; sequence VAAKQGESDPERKETRQKVDDD. Residues 682–698 are compositionally biased toward basic and acidic residues; it reads GESDPERKETRQKVDDD. Positions 698–760 constitute a Cullin neddylation domain; that stretch reads DRKHEIEAAI…REYLARTPED (63 aa). K712 participates in a covalent cross-link: Glycyl lysine isopeptide (Lys-Gly) (interchain with G-Cter in NEDD8).

The protein belongs to the cullin family. Component of multiple BCR (BTB-CUL3-RBX1) E3 ubiquitin-protein ligase complexes formed of cul3, rbx1 and a variable BTB domain-containing protein acting as both, adapter to cullin and substrate recognition subunit. Interacts with btbd6. In terms of processing, neddylated. Attachment of NEDD8 is required for the E3 ubiquitin-protein ligase activity of the SCF-like complex.

The protein localises to the nucleus. The protein operates within protein modification; protein ubiquitination. Probable core component of cullin-based SCF-like E3 ubiquitin-protein ligase complexes which mediate the ubiquitination and subsequent proteasomal degradation of target proteins. The E3 ubiquitin-protein ligase activity of the complex is dependent on the neddylation of the cullin subunit. Involved in ER-Golgi transport by regulating the size of COPII coats, thereby playing a key role in collagen export, which is required for embryonic stem (ES) cells division. May play a role in the regulation of mittotic entry via ubiquitination of aurka. The chain is Cullin-3-A (cul3a) from Xenopus laevis (African clawed frog).